A 96-amino-acid polypeptide reads, in one-letter code: Co-chaperonin GroES (96 aa).

Belongs to the GroES chaperonin family. In terms of assembly, heptamer of 7 subunits arranged in a ring. Interacts with the chaperonin GroEL.

The protein resides in the cytoplasm. Functionally, together with the chaperonin GroEL, plays an essential role in assisting protein folding. The GroEL-GroES system forms a nano-cage that allows encapsulation of the non-native substrate proteins and provides a physical environment optimized to promote and accelerate protein folding. GroES binds to the apical surface of the GroEL ring, thereby capping the opening of the GroEL channel. This Myxococcus xanthus (strain DK1622) protein is Co-chaperonin GroES.